The following is a 2640-amino-acid chain: Collagen alpha-5(VI) chain (2640 aa).

The N-terminal stretch at 1 to 18 is a signal peptide; the sequence is MKLRLIAFVLILWTETLA. The interval 19-1426 is nonhelical region; that stretch reads DQSPGPGPEY…ACCCTFCKCP (1408 aa). VWFA domains are found at residues 30 to 209, 268 to 445, 474 to 644, 660 to 829, 846 to 1023, 1037 to 1214, and 1226 to 1413; these read DVVF…IKDV, DLIF…LKKI, DIYF…KNEI, DIMF…ESKL, DIVF…QETL, DVIF…VREI, and DVVV…LGNI. N-linked (GlcNAc...) asparagine glycosylation is found at Asn201, Asn292, and Asn614. Collagen-like domains lie at 1426 to 1478, 1474 to 1524, 1557 to 1614, 1632 to 1689, and 1706 to 1762; these read PGIP…GCPG, VGCP…DPGN, GQKG…GPEG, GSQG…GIPG, and GDPG…AGQP. A triple-helical region region spans residues 1427-1760; sequence GIPGPHGTRG…GRRGPKGTAG (334 aa). The disordered stretch occupies residues 1435–1761; it reads RGLQASKGSS…RRGPKGTAGQ (327 aa). Residues 1452–1464 show a composition bias toward basic and acidic residues; it reads HRGEDGDPGRRGE. Positions 1537–1567 are enriched in basic and acidic residues; sequence DGEKGFPGDPGDPGKDSNIKGQKGEKGERGR. The span at 1597–1609 shows a compositional bias: polar residues; the sequence is PSGQAGNPGPQGT. Residues 1610–1622 are compositionally biased toward low complexity; it reads QGPEGLQGSQGSS. Positions 1649-1651 match the Cell attachment site motif; the sequence is RGD. The span at 1718-1727 shows a compositional bias: gly residues; the sequence is GIPGGPGPKG. Over residues 1740 to 1750 the composition is skewed to low complexity; sequence RSGLQGSQGPP. Residues 1761 to 2640 form a nonhelical region region; the sequence is QPIYSPCELI…NSKQDGEDAR (880 aa). VWFA domains follow at residues 1790 to 1970 and 1996 to 2186; these read ELVF…KLRR and DVAF…VKFL. Short sequence motifs (cell attachment site) lie at residues 2216–2218 and 2259–2261; these read RGD. The VWFA 10 domain occupies 2321–2516; it reads DVAFLIDASQ…PDLDYVIKFI (196 aa). N-linked (GlcNAc...) asparagine glycosylation occurs at Asn2541. A disordered region spans residues 2617–2640; the sequence is DKEEPCSAETPAPVNSKQDGEDAR.

This sequence belongs to the type VI collagen family. In terms of assembly, trimers composed of three different chains: alpha-1(VI), alpha-2(VI), and alpha-3(VI) or alpha-4(VI) or alpha-5(VI) or alpha-6(VI). Post-translationally, prolines at the third position of the tripeptide repeating unit (G-X-Y) are hydroxylated in some or all of the chains. As to expression, in newborn, it is expressed in lung, heart, kidney, muscle, brain, intestine, skin, femur, sternum and calvaria. In adult, it is widely expressed and is detected in lung, heart, kidney, spleen, muscle, ovary, uterus, brain, skin, liver and sternum.

It localises to the secreted. It is found in the extracellular space. The protein resides in the extracellular matrix. Its function is as follows. Collagen VI acts as a cell-binding protein. The chain is Collagen alpha-5(VI) chain (Col6a5) from Mus musculus (Mouse).